The primary structure comprises 129 residues: Putative redox protein FMP46, mitochondrial (129 aa).

A mitochondrion-targeting transit peptide spans 1–21 (MSMFRTLQRQPRTISLFTHDL). Residue cysteine 94 is part of the active site.

The protein belongs to the FMP46 family.

The protein localises to the mitochondrion. Functionally, putative mitochondrial redox protein which could be involved in the reduction of small toxic molecules. The sequence is that of Putative redox protein FMP46, mitochondrial (FMP46) from Candida glabrata (strain ATCC 2001 / BCRC 20586 / JCM 3761 / NBRC 0622 / NRRL Y-65 / CBS 138) (Yeast).